Reading from the N-terminus, the 33-residue chain is Rugosin-A (33 aa).

Cys27 and Cys33 are disulfide-bonded.

The protein belongs to the frog skin active peptide (FSAP) family. Brevinin subfamily. In terms of tissue distribution, expressed by the skin glands.

The protein localises to the secreted. In terms of biological role, has antibacterial activity against Gram-positive bacteria. This chain is Rugosin-A, found in Glandirana rugosa (Japanese wrinkled frog).